Reading from the N-terminus, the 438-residue chain is Nucleolar protein 12 (438 aa).

Disordered stretches follow at residues Met-1–Thr-28 and Ala-60–Ser-94. Positions Ala-60–Glu-71 are enriched in acidic residues. A phosphoserine mark is found at Ser-94 and Ser-95. Residues Ala-108–Lys-146 form a disordered region. The segment covering Val-135–Lys-146 has biased composition (basic and acidic residues). 2 consecutive RRM domains span residues Lys-164–His-262 and Arg-270–Ser-348. 2 stretches are compositionally biased toward basic residues: residues Ala-346 to Ser-357 and Ala-402 to Glu-412. 2 disordered regions span residues Ala-346–Thr-366 and Glu-390–Lys-438.

This sequence belongs to the RRM RBM34 family.

It is found in the nucleus. The protein resides in the nucleolus. Its function is as follows. Involved in pre-25S rRNA processing. This Schizosaccharomyces pombe (strain 972 / ATCC 24843) (Fission yeast) protein is Nucleolar protein 12 (nop12).